The following is a 208-amino-acid chain: N-(5'-phosphoribosyl)anthranilate isomerase (208 aa).

It belongs to the TrpF family.

The catalysed reaction is N-(5-phospho-beta-D-ribosyl)anthranilate = 1-(2-carboxyphenylamino)-1-deoxy-D-ribulose 5-phosphate. The protein operates within amino-acid biosynthesis; L-tryptophan biosynthesis; L-tryptophan from chorismate: step 3/5. The protein is N-(5'-phosphoribosyl)anthranilate isomerase of Neisseria gonorrhoeae (strain NCCP11945).